The sequence spans 491 residues: NADH-quinone oxidoreductase subunit N (491 aa).

14 helical membrane passes run 11–31 (ATAEIFVAVMALVIMLATTFA), 38–58 (LAYGLTLVTLIGAAIITYNTA), 74–94 (LLGDVLKLLIYFSMAVALLYG), 106–126 (PEYYVLALLMTLGMMVMVTSN), 128–148 (LLSMYIGLELMSLSLYALVAF), 163–183 (FVLGALASGLLLYGMSMLYGA), 206–226 (LLFGLVFLMAGICFKLGVVPF), 243–263 (LIIATAPKLAAFAMAVRLLVW), 272–292 (WQTMLMFVAVLSIVLGNLAAI), 301–321 (LAYSGISHMGFMLLGLLSGVV), 336–356 (MFYAISYVIMSLASFGMIILL), 379–399 (FAAMMMFVMFSMAGIPFFIGF), 410–430 (VAAGYIWVAVVAVLMSVIGAF), and 465–485 (LAIAAIGLAPQGVMTLCTFVL).

This sequence belongs to the complex I subunit 2 family. As to quaternary structure, NDH-1 is composed of 14 different subunits. Subunits NuoA, H, J, K, L, M, N constitute the membrane sector of the complex.

The protein localises to the cell inner membrane. The catalysed reaction is a quinone + NADH + 5 H(+)(in) = a quinol + NAD(+) + 4 H(+)(out). Functionally, NDH-1 shuttles electrons from NADH, via FMN and iron-sulfur (Fe-S) centers, to quinones in the respiratory chain. The immediate electron acceptor for the enzyme in this species is believed to be ubiquinone. Couples the redox reaction to proton translocation (for every two electrons transferred, four hydrogen ions are translocated across the cytoplasmic membrane), and thus conserves the redox energy in a proton gradient. The sequence is that of NADH-quinone oxidoreductase subunit N from Azoarcus sp. (strain BH72).